A 253-amino-acid chain; its full sequence is MSSLIALGKRQTLLSHNEFLNFKNQKGFCKRFISQLNKKSNFPALAMTVPEATKYLKSVSISVPYVGSYMLSIALKSNRRAPSARGQIAFPHPFQEPPKICVFAKGAAADEALKLGATYVGAEDLVKKIQTEPLEFSKCFAHPNSAELLPQVAKLLGSKRLMPSIKRGTISDELKPLIESALTAVDYRQNDAGSINLPVGKLGFSDKELQENIEALVSNVRFTLAKLPGKVKVTVKHVHLSASHAIAIPLQYK.

A mitochondrion-targeting transit peptide spans 1–81 (MSSLIALGKR…SIALKSNRRA (81 aa)).

The protein belongs to the universal ribosomal protein uL1 family. As to quaternary structure, component of the mitochondrial large ribosomal subunit (mt-LSU). Mature yeast 74S mitochondrial ribosomes consist of a small (37S) and a large (54S) subunit. The 37S small subunit contains a 15S ribosomal RNA (15S mt-rRNA) and at least 32 different proteins. The 54S large subunit contains a 21S rRNA (21S mt-rRNA) and at least 45 different proteins.

The protein localises to the mitochondrion. Component of the mitochondrial ribosome (mitoribosome), a dedicated translation machinery responsible for the synthesis of mitochondrial genome-encoded proteins, including at least some of the essential transmembrane subunits of the mitochondrial respiratory chain. The mitoribosomes are attached to the mitochondrial inner membrane and translation products are cotranslationally integrated into the membrane. This Schizosaccharomyces pombe (strain 972 / ATCC 24843) (Fission yeast) protein is Large ribosomal subunit protein uL1m (mrpl1).